Reading from the N-terminus, the 131-residue chain is Beta/delta-urticatoxin-Dm2a (131 aa).

Positions Met1–Ala24 are cleaved as a signal peptide. Positions Ser25–Glu69 are excised as a propeptide. 6 disulfides stabilise this stretch: Cys72–Cys88, Cys79–Cys93, Cys87–Cys101, Cys103–Cys117, Cys110–Cys122, and Cys116–Cys130.

It belongs to the urticatoxin-2 family. In terms of tissue distribution, expressed in trichomes, that are stiff epidermal hairs located on the surface of petioles and leaves.

It is found in the secreted. Functionally, plant defense neurotoxin that causes pain and systemic symptoms in mammals via modulation of voltage-gated sodium channels (Nav). Potent modulator of human Nav1.5/SCN5A (EC(50)=55 nM), Nav1.6/SCN8A (EC(50)=0.86 nM), and Nav1.7/SCN9A (EC(50)=208 nM), where it shifts the activation threshold to more negative potentials and delays fast inactivation. Also shifts the voltage-dependence of steady-state fast inactivation of Nav1.6/SCN8A, but not that of Nav1.5/SCN5A or Nav1.7/SCN9A. On Nav1.7/SCN9A, principally acts by binding to extracellular loops of domain IV (Nav site 3). In vivo, intraplantar injection into mice causes numerous dose-dependent, immediate, and long-lasting spontaneous pain behaviors, while no swelling is observed in the injected paw. At the highest doses tested, systemic symptoms including hypokinesia and hypersalivation are observed. This Dendrocnide moroides (Gympie stinging tree) protein is Beta/delta-urticatoxin-Dm2a.